The chain runs to 1766 residues: E3 ubiquitin-protein ligase listerin (1766 aa).

The segment covering 1-11 has biased composition (basic residues); it reads MGGKNKQRTKG. The tract at residues 1–20 is disordered; it reads MGGKNKQRTKGNVRPSSSGR. 5 HEAT repeats span residues 100-138, 193-231, 292-329, 335-372, and 512-549; these read KGVLPYWPRIYCKISLDHDRRVREATQQSFEQLILKVKK, VLQDHLLKETPDTLSDPQTVPEEEREAKFFRILTCSLLA, AEAPRVCPAVLLSIDDSDAVVCPALWEAVLHAIATIED, NARKGVLPKLWTVLREGGRGLATVIYPNILPFISKVPP, and EKTLFAISDMLEVLQNPKTATKPNNRKSLKVKFSDEDE. Positions 529–567 are disordered; that stretch reads KTATKPNNRKSLKVKFSDEDESERNTENGKITEVRSNSD. A compositionally biased stretch (basic and acidic residues) spans 551–566; it reads ERNTENGKITEVRSNS. HEAT repeat units lie at residues 606–644, 672–710, 916–953, 1184–1227, 1314–1355, and 1406–1447; these read EQHLKFLSALLNFFSSNRVFQVLLEQGSNAGCPPAESQE, KDMHFLVDILYSVLNCCNSDDERKVILDDLTKMDLKWIV, QVLISAVSDLLSTLLEADRQSGCLVGAYVEHVMPNRTE, HLLP…MIRY, GIHN…YISK, and SKLM…TQEL. The RING-type zinc-finger motif lies at 1715-1762; sequence CMICFSVIHGSNYSLPKKACRTCKKKFHSACLYKWFTSSNKSTCPLCR.

This sequence belongs to the LTN1 family. Component of the ribosome quality control complex (RQC), composed of at least the E3 ubiquitin ligase LTN1 and NEMF associated with the 60S ribosomal subunit. The complex probably also contains TCF25 as well as VCP/p97 and its ubiquitin-binding cofactors.

The protein localises to the cytoplasm. The protein resides in the cytosol. It catalyses the reaction S-ubiquitinyl-[E2 ubiquitin-conjugating enzyme]-L-cysteine + [acceptor protein]-L-lysine = [E2 ubiquitin-conjugating enzyme]-L-cysteine + N(6)-ubiquitinyl-[acceptor protein]-L-lysine.. It participates in protein modification; protein ubiquitination. Functionally, E3 ubiquitin-protein ligase component of the ribosome quality control complex (RQC), a ribosome-associated complex that mediates ubiquitination and extraction of incompletely synthesized nascent chains for proteasomal degradation. Within the RQC complex, LTN1 is recruited to stalled 60S ribosomal subunits by NEMF and mediates ubiquitination of stalled nascent chains. Ubiquitination leads to VCP/p97 recruitment for extraction and degradation of the incomplete translation product. The protein is E3 ubiquitin-protein ligase listerin (LTN1) of Gallus gallus (Chicken).